We begin with the raw amino-acid sequence, 554 residues long: Propanediol dehydratase large subunit (554 aa).

This sequence belongs to the diol/glycerol dehydratase large subunit family. In terms of assembly, the propanediol dehydratase enzyme is a heterotrimeric complex composed of a large (PduC), a medium (PduD) and a small (PduE) subunit. It depends on adenosylcob(III)alamin as a cofactor.

It is found in the bacterial microcompartment. The enzyme catalyses propane-1,2-diol = propanal + H2O. It functions in the pathway polyol metabolism; 1,2-propanediol degradation. Its activity is regulated as follows. Inhibited by glycerol. Functionally, part of the PduCDE complex that catalyzes the dehydration of 1,2-propanediol (1,2-PD) to propionaldehyde. Required for S.typhimurium growth on 1,2-PD as the sole carbon and energy source. This subunit is directly targeted to the BMC. Its function is as follows. The 1,2-PD-specific bacterial microcompartment (BMC) concentrates low levels of 1,2-PD catabolic enzymes, concentrates volatile reaction intermediates thus enhancing pathway flux and keeps the level of toxic, mutagenic propionaldehyde low. The sequence is that of Propanediol dehydratase large subunit from Salmonella typhimurium (strain LT2 / SGSC1412 / ATCC 700720).